Here is a 463-residue protein sequence, read N- to C-terminus: MSTAALVEGKIVQCIGAVIDVEFPRDSMPKIYDALILDGSELTLEVQQQLGDGVVRTICLGASDGLRRGLTVKNTSKPISVPVGKPTLGRIMDVLGRPIDEAGPIESEHTRSIHQKAPAFDELSPSTELLETGIKVIDLICPFAKGGKVGLFGGAGVGKTVNMMELINNIAKEHGGYSVFAGVGERTREGNDFYHEMKDSNVLDKVALVYGQMNEPPGNRLRVLTGLTMAEHFRDEGLDVLFFVDNIYRFTLAGTEVSALLGRMPSAVGYQPTLAEEMGKLQERITSTKKGSITSVQAVYVPADDLTDPSPATTFGHLDATVVLSRDIASLGIYPAVDPLDSTSRQIDPNVIGEEHYSITRRVQQTLQRYKELRDIIAILGMDELSPEDKLSVARARKIQRFLSQPFHVAEVFTGSPGKYVPLKETIRGFKMIVDGECDHLPEQAFYMVGTIDEAFEKAKKIS.

153 to 160 (GGAGVGKT) provides a ligand contact to ATP.

This sequence belongs to the ATPase alpha/beta chains family. F-type ATPases have 2 components, CF(1) - the catalytic core - and CF(0) - the membrane proton channel. CF(1) has five subunits: alpha(3), beta(3), gamma(1), delta(1), epsilon(1). CF(0) has three main subunits: a(1), b(2) and c(9-12). The alpha and beta chains form an alternating ring which encloses part of the gamma chain. CF(1) is attached to CF(0) by a central stalk formed by the gamma and epsilon chains, while a peripheral stalk is formed by the delta and b chains.

The protein resides in the cell inner membrane. The catalysed reaction is ATP + H2O + 4 H(+)(in) = ADP + phosphate + 5 H(+)(out). In terms of biological role, produces ATP from ADP in the presence of a proton gradient across the membrane. The catalytic sites are hosted primarily by the beta subunits. The polypeptide is ATP synthase subunit beta (Burkholderia cepacia (Pseudomonas cepacia)).